A 1191-amino-acid polypeptide reads, in one-letter code: uncharacterized protein (1191 aa).

WD repeat units lie at residues 558–588 (GHRDGVTSVAISSHKNLIASASRDGTVHLWT), 599–629 (GHTGSIYRVDFSPNGKIFATAGQDQTVKIWD), 640–670 (GHQDSVYSVSFSPDGEILASTSRDRTVRLWH), 682–712 (GHTKSVDDAQFSPDGQTLVSVCRDGQIRLWD), 723–753 (LPEVAFFGVNWHPNGNLLAVAADDGTVRLWT), 764–794 (GHDEFVTRVVFTPDGKQLFSSSSNGSVIHWS), 805–835 (GYPEAIFGLALASNGALLAIGAENNLVKVWD), 995–1025 (QRKEPIRSVSLHPTLPQLAAGDEQGNLTLWN), 1036–1066 (AHGDRLNQLQYSPNGKYLLSAGREGTAKIWS), 1077–1107 (SDPLPIDQIAISPDSQWIATAASDGMVRLWD), and 1118–1148 (STSGSLLGLDFNRQGQWLLAVAQNGDLQSWP).

This is an uncharacterized protein from Synechocystis sp. (strain ATCC 27184 / PCC 6803 / Kazusa).